The sequence spans 468 residues: Argininosuccinate lyase (468 aa).

The protein belongs to the lyase 1 family. Argininosuccinate lyase subfamily.

It is found in the cytoplasm. The catalysed reaction is 2-(N(omega)-L-arginino)succinate = fumarate + L-arginine. The protein operates within amino-acid biosynthesis; L-arginine biosynthesis; L-arginine from L-ornithine and carbamoyl phosphate: step 3/3. In Sphingopyxis alaskensis (strain DSM 13593 / LMG 18877 / RB2256) (Sphingomonas alaskensis), this protein is Argininosuccinate lyase.